A 494-amino-acid chain; its full sequence is UPF0371 protein SPCG_0344 (494 aa).

It belongs to the UPF0371 family.

The protein is UPF0371 protein SPCG_0344 of Streptococcus pneumoniae (strain CGSP14).